A 173-amino-acid polypeptide reads, in one-letter code: MSILEILYYPDKRLRTIADPVVAVSDDTNQIINDMFDTMYFKKGIGLAATQVNIHQQIIVIDLYKKNKQRLVFINPSITKKTGIISIPESCLSIPQIYEIVPRSEKITIQSLDQYGNKFEMEANNLLAICIQHEVDHLFGKLFIDHLSPLKIKKIHKKIKKLSKTFKKNQFPL.

Fe cation contacts are provided by cysteine 91 and histidine 133. Residue glutamate 134 is part of the active site. Histidine 137 is a binding site for Fe cation.

Belongs to the polypeptide deformylase family. Fe(2+) is required as a cofactor.

It carries out the reaction N-terminal N-formyl-L-methionyl-[peptide] + H2O = N-terminal L-methionyl-[peptide] + formate. Functionally, removes the formyl group from the N-terminal Met of newly synthesized proteins. Requires at least a dipeptide for an efficient rate of reaction. N-terminal L-methionine is a prerequisite for activity but the enzyme has broad specificity at other positions. This chain is Peptide deformylase, found in Blochmanniella pennsylvanica (strain BPEN).